We begin with the raw amino-acid sequence, 695 residues long: Follicle-stimulating hormone receptor (695 aa).

The signal sequence occupies residues 1-17; that stretch reads MTFLLVSLLAFLSLGSG. 2 disulfide bridges follow: Cys18–Cys25 and Cys23–Cys32. The region spanning 18–46 is the LRRNT domain; sequence CHHRICHCWHRVFLCQESKVTEIPSDLPR. The Extracellular segment spans residues 18 to 366; sequence CHHRICHCWH…EDIMGYDILR (349 aa). LRR repeat units lie at residues 49 to 72, 73 to 97, 98 to 118, 119 to 143, 144 to 169, 170 to 192, 193 to 216, 217 to 240, and 241 to 259; these read VELR…FGDL, EKIE…LSKL, HEIR…AFQN, LPNL…KIQS, LQKV…MGLS, FESM…AFNG, TQLD…VFQG, ASGP…GLEN, and IKKL…PSLD. N-linked (GlcNAc...) asparagine glycosylation occurs at Asn93. 2 N-linked (GlcNAc...) asparagine glycosylation sites follow: Asn191 and Asn199. Cystine bridges form between Cys275–Cys346, Cys276–Cys292, Cys276–Cys356, and Cys292–Cys338. A glycan (N-linked (GlcNAc...) asparagine) is linked at Asn293. Tyr335 bears the Sulfotyrosine mark. The helical transmembrane segment at 367–387 threads the bilayer; it reads VLIWFISILAITGNIIVLMIL. The Cytoplasmic segment spans residues 388 to 398; that stretch reads ITSQYKLTVPR. Residues 399-419 traverse the membrane as a helical segment; that stretch reads FLMCNLAFADLCIGIYLLLIA. Residues 420 to 444 lie on the Extracellular side of the membrane; the sequence is SVDIYTKSQYHNYAIDWQTGAGCDA. The chain crosses the membrane as a helical span at residues 445-465; sequence AGFFTVFASELSVYTLTVITL. Residues 466–487 lie on the Cytoplasmic side of the membrane; that stretch reads ERWHTITHAMQLECKVQLRHAA. Residues 488–508 form a helical membrane-spanning segment; it reads IIMLLGWIFAFMVALFPIFGI. The Extracellular portion of the chain corresponds to 509-528; sequence SSYMKVSICLPMDIDSPLSQ. The helical transmembrane segment at 529-550 threads the bilayer; that stretch reads LYVMSLLVLNVLAFVVICCCYA. Residues 551–573 are Cytoplasmic-facing; that stretch reads HIYLTVRNPNIVSSSSDTKIAKR. A helical membrane pass occupies residues 574–594; the sequence is MAMLIFTDFLCMAPISFFAIS. The Extracellular segment spans residues 595–608; sequence ASLKVPLITVSKSK. Residues 609 to 629 form a helical membrane-spanning segment; it reads ILLVLFYPINSCANPFLYAIF. At 630–695 the chain is on the cytoplasmic side; the sequence is TKNFRRDFFI…LIPLRHLAKN (66 aa).

It belongs to the G-protein coupled receptor 1 family. FSH/LSH/TSH subfamily. As to quaternary structure, homotrimer. Functions as a homotrimer binding the FSH hormone heterodimer composed of CGA and FSHB. Interacts with ARRB2. Interacts with APPL2; interaction is independent of follicle stimulating hormone stimulation. N-glycosylated; indirectly required for FSH-binding, possibly via a conformational change that allows high affinity binding of hormone. Post-translationally, sulfated.

The protein resides in the cell membrane. In terms of biological role, g protein-coupled receptor for follitropin, the follicle-stimulating hormone. Through cAMP production activates the downstream PI3K-AKT and ERK1/ERK2 signaling pathways. The protein is Follicle-stimulating hormone receptor (FSHR) of Felis catus (Cat).